Consider the following 345-residue polypeptide: CCAAT/enhancer-binding protein beta (345 aa).

The interval 1 to 24 (MQRLVAWDPACLPLPPPPPAFKSM) is required for Lys-174 sumoylation. Arg-3 is subject to Asymmetric dimethylarginine; by CARM1. The required for MYC transcriptional repression stretch occupies residues 24–135 (MEVANFYYEA…YGGKNCKKPA (112 aa)). Position 43 is an N6-acetyllysine; alternate (Lys-43). Residue Lys-43 is modified to N6-methylated lysine; alternate. 2 disordered regions span residues 46 to 67 (PAAP…GSIG) and 79 to 116 (LEPL…QHHD). Residues 47–59 (AAPPAARPGPRPP) are compositionally biased toward pro residues. Low complexity predominate over residues 84–100 (APQAPAPATATDTFEAA). A 9aaTAD motif is present at residues 116–124 (DFLSDLFSD). 2 positions are modified to N6-acetyllysine; by KAT2A and KAT2B: Lys-129 and Lys-132. Lys-133 bears the N6-acetyllysine; by KAT2A and KAT2B; alternate mark. Lys-133 is covalently cross-linked (Glycyl lysine isopeptide (Lys-Gly) (interchain with G-Cter in SUMO2); alternate). The tract at residues 157-178 (FAPLHPPPPPPPPPAELKAEPG) is disordered. Pro residues predominate over residues 160 to 171 (LHPPPPPPPPPA). Lys-174 participates in a covalent cross-link: Glycyl lysine isopeptide (Lys-Gly) (interchain with G-Cter in SUMO2); alternate. A Glycyl lysine isopeptide (Lys-Gly) (interchain with G-Cter in SUMO); alternate cross-link involves residue Lys-174. Glycyl lysine isopeptide (Lys-Gly) (interchain with G-Cter in SUMO2) cross-links involve residues Lys-185 and Lys-187. The segment covering 218–232 (SGSSGSLSTSSSSSP) has biased composition (low complexity). Residues 218 to 271 (SGSSGSLSTSSSSSPPGTPSPADAKAPPTACYAGAAPAPSQVKSKAKKTVDKHS) form a disordered region. Thr-226 bears the Phosphothreonine; by GSK3-beta mark. O-linked (GlcNAc) serine glycans are attached at residues Ser-227 and Ser-228. At Ser-231 the chain carries Phosphoserine; by GSK3-beta. Thr-235 bears the Phosphothreonine; by RPS6KA1, CDK2 and MAPK mark. Residues Lys-260 and Lys-262 each participate in a glycyl lysine isopeptide (Lys-Gly) (interchain with G-Cter in SUMO2) cross-link. Thr-266 bears the Phosphothreonine; by RPS6KA1 and PKC/PRKCA mark. Residues 271 to 334 (SDEYKIRRER…STLRNLFKQL (64 aa)) enclose the bZIP domain. Residues 275–295 (KIRRERNNIAVRKSRDKAKMR) are basic motif. At Ser-288 the chain carries Phosphoserine; by PKC/PRKCA. The tract at residues 297 to 304 (LETQHKVL) is leucine-zipper. Ser-325 carries the post-translational modification Phosphoserine; by CaMK2. Lys-332 participates in a covalent cross-link: Glycyl lysine isopeptide (Lys-Gly) (interchain with G-Cter in SUMO2).

Belongs to the bZIP family. C/EBP subfamily. As to quaternary structure, binds DNA as a homodimer and as a heterodimer. Interacts with ATF4. Binds DNA as a heterodimer with ATF4. Interacts with MYB; within the complex, MYB and CEBPB bind to different promoter regions. Can form stable heterodimers with CEBPD. Can form stable heterodimers with CEBPA and CEBPE. Interacts with SIX1. Isoform 2 and isoform 3 also form heterodimers. Interacts with TRIM28 and PTGES2. Interacts with PRDM16. Interacts with CCDC85B. Forms a complex with THOC5. Interacts with ZNF638; this interaction increases transcriptional activation. Interacts with CIDEA and CIDEC; these interactions increase transcriptional activation of a subset of CEBPB downstream target genes. Interacts with DDIT3/CHOP. Interacts with EP300; recruits EP300 to chromatin. Interacts with RORA; the interaction disrupts interaction with EP300. Interacts (not methylated) with MED23, MED26, SMARCA2, SMARCB1 and SMARCC1. Interacts with KAT2A and KAT2B. Interacts with ATF5; EP300 is required for ATF5 and CEBPB interaction and DNA binding. Interacts with NFE2L1; the heterodimer represses expression of DSPP during odontoblast differentiation. Methylated. Methylation at Arg-3 by CARM1 and at Lys-43 by EHMT2 inhibit transactivation activity. Methylation is probably inhibited by phosphorylation at Thr-235. In terms of processing, sumoylated by polymeric chains of SUMO2 or SUMO3. Sumoylation at Lys-174 is required for inhibition of T-cells proliferation. In adipocytes, sumoylation at Lys-174 by PIAS1 leads to ubiquitination and subsequent proteasomal degradation. Desumoylated by SENP2, which abolishes ubiquitination and stabilizes protein levels. Post-translationally, ubiquitinated, leading to proteasomal degradation. Phosphorylated at Thr-235 by MAPK and CDK2, serves to prime phosphorylation at Thr-226 and Ser-231 by GSK3B and acquire DNA-binding as well as transactivation activities, required to induce adipogenesis. MAPK and CDK2 act sequentially to maintain Thr-235 in the primed phosphorylated state during mitotical cloning expansion and thereby progression of terminal differentiation. Phosphorylation at Thr-266 enhances transactivation activity. Phosphorylation at Ser-325 in response to calcium increases transactivation activity. Phosphorylated at Thr-235 by RPS6KA1. In terms of processing, O-glycosylated, glycosylation at Ser-227 and Ser-228 prevents phosphorylation on Thr-235, Ser-231 and Thr-226 and DNA binding activity which delays the adipocyte differentiation program. Post-translationally, acetylated. Acetylation at Lys-43 is an important and dynamic regulatory event that contributes to its ability to transactivate target genes, including those associated with adipogenesis and adipocyte function. Deacetylation by HDAC1 represses its transactivation activity. Acetylated by KAT2A and KAT2B within a cluster of lysine residues between amino acids 129-133, this acetylation is strongly induced by glucocorticoid treatment and enhances transactivation activity. As to expression, expressed at low levels in the lung, kidney and spleen.

It localises to the nucleus. The protein localises to the cytoplasm. Important transcription factor regulating the expression of genes involved in immune and inflammatory responses. Also plays a significant role in adipogenesis, as well as in the gluconeogenic pathway, liver regeneration, and hematopoiesis. The consensus recognition site is 5'-T[TG]NNGNAA[TG]-3'. Its functional capacity is governed by protein interactions and post-translational protein modifications. During early embryogenesis, plays essential and redundant roles with CEBPA. Has a promitotic effect on many cell types such as hepatocytes and adipocytes but has an antiproliferative effect on T-cells by repressing MYC expression, facilitating differentiation along the T-helper 2 lineage. Binds to regulatory regions of several acute-phase and cytokines genes and plays a role in the regulation of acute-phase reaction and inflammation. Also plays a role in intracellular bacteria killing. During adipogenesis, is rapidly expressed and, after activation by phosphorylation, induces CEBPA and PPARG, which turn on the series of adipocyte genes that give rise to the adipocyte phenotype. The delayed transactivation of the CEBPA and PPARG genes by CEBPB appears necessary to allow mitotic clonal expansion and thereby progression of terminal differentiation. Essential for female reproduction because of a critical role in ovarian follicle development. Restricts osteoclastogenesis: together with NFE2L1; represses expression of DSPP during odontoblast differentiation. Its function is as follows. Essential for gene expression induction in activated macrophages. Plays a major role in immune responses such as CD4(+) T-cell response, granuloma formation and endotoxin shock. Not essential for intracellular bacteria killing. In terms of biological role, acts as a dominant negative through heterodimerization with isoform 2. Promotes osteoblast differentiation and osteoclastogenesis. This chain is CCAAT/enhancer-binding protein beta, found in Homo sapiens (Human).